A 154-amino-acid polypeptide reads, in one-letter code: UPF0178 protein SPO3827 (154 aa).

It belongs to the UPF0178 family.

In Ruegeria pomeroyi (strain ATCC 700808 / DSM 15171 / DSS-3) (Silicibacter pomeroyi), this protein is UPF0178 protein SPO3827.